Reading from the N-terminus, the 349-residue chain is D-alanine--D-alanine ligase (349 aa).

The region spanning 132–335 (KHVFEAVGVP…YSDLIEKLVD (204 aa)) is the ATP-grasp domain. Position 162 to 217 (162 to 217 (VEKLEFPVFVKPANMGSSVGISKVDDLADLQPALSEAYKYDNRVVIEQGVDAREIE)) interacts with ATP. Mg(2+)-binding residues include D289, E302, and N304.

This sequence belongs to the D-alanine--D-alanine ligase family. Mg(2+) is required as a cofactor. Requires Mn(2+) as cofactor.

Its subcellular location is the cytoplasm. The enzyme catalyses 2 D-alanine + ATP = D-alanyl-D-alanine + ADP + phosphate + H(+). It participates in cell wall biogenesis; peptidoglycan biosynthesis. Cell wall formation. The chain is D-alanine--D-alanine ligase from Lactococcus lactis subsp. cremoris (strain SK11).